The chain runs to 101 residues: MAKLALINREQKRADLVKKYAGKRAELKAIIDDQSKSEEERYEARLKLQALPRNSAPTRQRNRCTLTGRPRGTFRKFGLGRIKLREIAMRGEIPGMTKASW.

Belongs to the universal ribosomal protein uS14 family. In terms of assembly, part of the 30S ribosomal subunit. Contacts proteins S3 and S10.

In terms of biological role, binds 16S rRNA, required for the assembly of 30S particles and may also be responsible for determining the conformation of the 16S rRNA at the A site. This chain is Small ribosomal subunit protein uS14, found in Janthinobacterium sp. (strain Marseille) (Minibacterium massiliensis).